Consider the following 531-residue polypeptide: SWI/SNF-related matrix-associated actin-dependent regulator of chromatin subfamily D member 2 (531 aa).

2 positions are modified to asymmetric dimethylarginine: Arg-81 and Arg-104. Ser-203 carries the phosphoserine modification. Residues 205-226 form a disordered region; it reads SKAEGDSAGTAGTPGGTPAGDK. The residue at position 217 (Thr-217) is a Phosphothreonine. Lys-226 is covalently cross-linked (Glycyl lysine isopeptide (Lys-Gly) (interchain with G-Cter in SUMO2)). In terms of domain architecture, SWIB/MDM2 spans 306–383; sequence HQPPQYKLDP…PMKLAGLLQH (78 aa).

The protein belongs to the SMARCD family. Component of the multiprotein chromatin-remodeling complexes SWI/SNF: SWI/SNF-A (BAF), SWI/SNF-B (PBAF) and related complexes. The canonical complex contains a catalytic subunit (either SMARCA4/BRG1/BAF190A or SMARCA2/BRM/BAF190B), and at least SMARCE1, ACTL6A/BAF53, SMARCC1/BAF155, SMARCC2/BAF170, and SMARCB1/SNF5/BAF47. Other subunits specific to each of the complexes may also be present permitting several possible combinations developmentally and tissue specific. Component of the BAF complex, which includes at least actin (ACTB), ARID1A/BAF250A, ARID1B/BAF250B, SMARCA2/BRM, SMARCA4/BRG1, ACTL6A/BAF53, ACTL6B/BAF53B, SMARCE1/BAF57, SMARCC1/BAF155, SMARCC2/BAF170, SMARCB1/SNF5/INI1, and one or more SMARCD1/BAF60A, SMARCD2/BAF60B, or SMARCD3/BAF60C. In muscle cells, the BAF complex also contains DPF3. Component of the SWI/SNF-B (PBAF) chromatin remodeling complex, at least composed of SMARCA4/BRG1, SMARCB1/BAF47/SNF5, ACTL6A/BAF53A or ACTL6B/BAF53B, SMARCE1/BAF57, SMARCD1/BAF60A, SMARCD2/BAF60B, perhaps SMARCD3/BAF60C, SMARCC1/BAF155, SMARCC2/BAF170, PBRM1/BAF180, ARID2/BAF200 and actin (ACTB). Interacts with UNKL. Interacts with CEBPE. Post-translationally, ubiquitinated through a signaling process involving RAC1 and the RING finger protein UNKL. As to expression, isoform 2 is expressed in the pancreas.

Its subcellular location is the nucleus. Involved in transcriptional activation and repression of select genes by chromatin remodeling (alteration of DNA-nucleosome topology). Component of SWI/SNF chromatin remodeling complexes that carry out key enzymatic activities, changing chromatin structure by altering DNA-histone contacts within a nucleosome in an ATP-dependent manner. Critical regulator of myeloid differentiation, controlling granulocytopoiesis and the expression of genes involved in neutrophil granule formation. This Homo sapiens (Human) protein is SWI/SNF-related matrix-associated actin-dependent regulator of chromatin subfamily D member 2 (SMARCD2).